We begin with the raw amino-acid sequence, 310 residues long: Ninja-family protein 3 (310 aa).

Disordered regions lie at residues 1-29 (MASR…GEPD), 68-140 (SLPG…DDAQ), and 156-215 (DQGN…EQPP). The segment covering 99–108 (ERWRRREMQS) has biased composition (basic and acidic residues). Polar residues-rich tracts occupy residues 156–166 (DQGNASSSMPE) and 176–193 (KSTS…QNKS).

It belongs to the Ninja family.

Its subcellular location is the nucleus. The chain is Ninja-family protein 3 (AFP-D1) from Triticum aestivum (Wheat).